The primary structure comprises 106 residues: Small ribosomal subunit protein uS10 (106 aa).

The protein belongs to the universal ribosomal protein uS10 family. As to quaternary structure, part of the 30S ribosomal subunit.

Involved in the binding of tRNA to the ribosomes. The chain is Small ribosomal subunit protein uS10 from Caldicellulosiruptor saccharolyticus (strain ATCC 43494 / DSM 8903 / Tp8T 6331).